The following is a 566-amino-acid chain: Pentatricopeptide repeat-containing protein At4g11690 (566 aa).

13 PPR repeats span residues 93–127 (KFRL…GFVP), 128–158 (GSNC…NKSK), 162–196 (DVYS…GFSP), 197–231 (NVVI…GLVA), 232–266 (NERT…GVFP), 267–301 (NLYT…GVSC), 302–336 (NIVT…GINP), 337–371 (NLIT…GLSP), 372–406 (SLVT…GIKP), 407–441 (SKVT…GLVP), 442–476 (DVHT…NCEP), 477–511 (NEVI…ELAP), and 512–546 (NVAS…GIDP).

The protein belongs to the PPR family. P subfamily.

This chain is Pentatricopeptide repeat-containing protein At4g11690, found in Arabidopsis thaliana (Mouse-ear cress).